Here is a 616-residue protein sequence, read N- to C-terminus: Dihydroxy-acid dehydratase (616 aa).

D81 serves as a coordination point for Mg(2+). C122 is a binding site for [2Fe-2S] cluster. D123 and K124 together coordinate Mg(2+). An N6-carboxylysine modification is found at K124. C195 is a [2Fe-2S] cluster binding site. Residue E491 coordinates Mg(2+). S517 serves as the catalytic Proton acceptor.

The protein belongs to the IlvD/Edd family. As to quaternary structure, homodimer. It depends on [2Fe-2S] cluster as a cofactor. Mg(2+) is required as a cofactor.

The enzyme catalyses (2R)-2,3-dihydroxy-3-methylbutanoate = 3-methyl-2-oxobutanoate + H2O. It catalyses the reaction (2R,3R)-2,3-dihydroxy-3-methylpentanoate = (S)-3-methyl-2-oxopentanoate + H2O. The protein operates within amino-acid biosynthesis; L-isoleucine biosynthesis; L-isoleucine from 2-oxobutanoate: step 3/4. It functions in the pathway amino-acid biosynthesis; L-valine biosynthesis; L-valine from pyruvate: step 3/4. Its function is as follows. Functions in the biosynthesis of branched-chain amino acids. Catalyzes the dehydration of (2R,3R)-2,3-dihydroxy-3-methylpentanoate (2,3-dihydroxy-3-methylvalerate) into 2-oxo-3-methylpentanoate (2-oxo-3-methylvalerate) and of (2R)-2,3-dihydroxy-3-methylbutanoate (2,3-dihydroxyisovalerate) into 2-oxo-3-methylbutanoate (2-oxoisovalerate), the penultimate precursor to L-isoleucine and L-valine, respectively. The polypeptide is Dihydroxy-acid dehydratase (Escherichia fergusonii (strain ATCC 35469 / DSM 13698 / CCUG 18766 / IAM 14443 / JCM 21226 / LMG 7866 / NBRC 102419 / NCTC 12128 / CDC 0568-73)).